Here is a 156-residue protein sequence, read N- to C-terminus: 6,7-dimethyl-8-ribityllumazine synthase (156 aa).

Residues phenylalanine 22, 57 to 59 (AYE), and 81 to 83 (TVI) contribute to the 5-amino-6-(D-ribitylamino)uracil site. 86–87 (GT) provides a ligand contact to (2S)-2-hydroxy-3-oxobutyl phosphate. The active-site Proton donor is the histidine 89. Phenylalanine 114 provides a ligand contact to 5-amino-6-(D-ribitylamino)uracil. Arginine 128 contributes to the (2S)-2-hydroxy-3-oxobutyl phosphate binding site.

Belongs to the DMRL synthase family. In terms of assembly, forms an icosahedral capsid composed of 60 subunits, arranged as a dodecamer of pentamers.

The enzyme catalyses (2S)-2-hydroxy-3-oxobutyl phosphate + 5-amino-6-(D-ribitylamino)uracil = 6,7-dimethyl-8-(1-D-ribityl)lumazine + phosphate + 2 H2O + H(+). It participates in cofactor biosynthesis; riboflavin biosynthesis; riboflavin from 2-hydroxy-3-oxobutyl phosphate and 5-amino-6-(D-ribitylamino)uracil: step 1/2. In terms of biological role, catalyzes the formation of 6,7-dimethyl-8-ribityllumazine by condensation of 5-amino-6-(D-ribitylamino)uracil with 3,4-dihydroxy-2-butanone 4-phosphate. This is the penultimate step in the biosynthesis of riboflavin. The polypeptide is 6,7-dimethyl-8-ribityllumazine synthase (Enterobacter sp. (strain 638)).